The chain runs to 779 residues: Ribosome-releasing factor 2, mitochondrial (779 aa).

Residues 68-353 (AKIRNIGIMA…AVTTYLPSPE (286 aa)) form the tr-type G domain. GTP-binding positions include 77-84 (AHIDAGKT), 141-145 (DTPGH), and 195-198 (NKMD).

The protein belongs to the TRAFAC class translation factor GTPase superfamily. Classic translation factor GTPase family. EF-G/EF-2 subfamily.

The protein localises to the mitochondrion. It carries out the reaction GTP + H2O = GDP + phosphate + H(+). Mitochondrial GTPase that mediates the disassembly of ribosomes from messenger RNA at the termination of mitochondrial protein biosynthesis. Acts in collaboration with MRRF. GTP hydrolysis follows the ribosome disassembly and probably occurs on the ribosome large subunit. Not involved in the GTP-dependent ribosomal translocation step during translation elongation. The chain is Ribosome-releasing factor 2, mitochondrial (Gfm2) from Rattus norvegicus (Rat).